The primary structure comprises 308 residues: uncharacterized protein (308 aa).

Glutamate 59 is a catalytic residue.

It belongs to the PhzF family.

This is an uncharacterized protein from Deinococcus radiodurans (strain ATCC 13939 / DSM 20539 / JCM 16871 / CCUG 27074 / LMG 4051 / NBRC 15346 / NCIMB 9279 / VKM B-1422 / R1).